Here is a 485-residue protein sequence, read N- to C-terminus: Glutamyl-tRNA(Gln) amidotransferase subunit A (485 aa).

Catalysis depends on charge relay system residues Lys79 and Ser154. Catalysis depends on Ser178, which acts as the Acyl-ester intermediate.

It belongs to the amidase family. GatA subfamily. Heterotrimer of A, B and C subunits.

It carries out the reaction L-glutamyl-tRNA(Gln) + L-glutamine + ATP + H2O = L-glutaminyl-tRNA(Gln) + L-glutamate + ADP + phosphate + H(+). In terms of biological role, allows the formation of correctly charged Gln-tRNA(Gln) through the transamidation of misacylated Glu-tRNA(Gln) in organisms which lack glutaminyl-tRNA synthetase. The reaction takes place in the presence of glutamine and ATP through an activated gamma-phospho-Glu-tRNA(Gln). The protein is Glutamyl-tRNA(Gln) amidotransferase subunit A of Geobacillus thermodenitrificans (strain NG80-2).